A 601-amino-acid polypeptide reads, in one-letter code: Probable serine/threonine-protein kinase WNK3 (601 aa).

One can recognise a Protein kinase domain in the interval 34–291; it reads GRFNEILGKG…ARELLDDPFL (258 aa). ATP-binding positions include 114–117 and Lys164; that span reads TELF. Asp181 serves as the catalytic Proton acceptor. Disordered stretches follow at residues 470–498 and 551–601; these read GWRPGPATDDDDDDDLVGGGDDPDAPGGA and ADDD…SEQP. Residues 477–493 are compositionally biased toward acidic residues; that stretch reads TDDDDDDDLVGGGDDPD. Residues 560–571 are compositionally biased toward polar residues; it reads LQGSSSDTGGSN. Positions 572-583 are enriched in basic and acidic residues; the sequence is HEQHAMGKDKEV.

Belongs to the protein kinase superfamily. Ser/Thr protein kinase family. WNK subfamily.

It catalyses the reaction L-seryl-[protein] + ATP = O-phospho-L-seryl-[protein] + ADP + H(+). The enzyme catalyses L-threonyl-[protein] + ATP = O-phospho-L-threonyl-[protein] + ADP + H(+). This Oryza sativa subsp. japonica (Rice) protein is Probable serine/threonine-protein kinase WNK3 (WNK3).